Reading from the N-terminus, the 629-residue chain is Glutamyl-tRNA(Gln) amidotransferase subunit E (629 aa).

Residues 405–426 are disordered; sequence PEETRRALPDGNTQYMRPLPGK.

The protein belongs to the GatB/GatE family. GatE subfamily. In terms of assembly, heterodimer of GatD and GatE.

The enzyme catalyses L-glutamyl-tRNA(Gln) + L-glutamine + ATP + H2O = L-glutaminyl-tRNA(Gln) + L-glutamate + ADP + phosphate + H(+). Its function is as follows. Allows the formation of correctly charged Gln-tRNA(Gln) through the transamidation of misacylated Glu-tRNA(Gln) in organisms which lack glutaminyl-tRNA synthetase. The reaction takes place in the presence of glutamine and ATP through an activated gamma-phospho-Glu-tRNA(Gln). The GatDE system is specific for glutamate and does not act on aspartate. This is Glutamyl-tRNA(Gln) amidotransferase subunit E from Thermococcus sibiricus (strain DSM 12597 / MM 739).